Reading from the N-terminus, the 188-residue chain is Mitochondrial import inner membrane translocase subunit TIM23-2 (188 aa).

Transmembrane regions (helical) follow at residues 64 to 84 (TGTA…ITGV), 112 to 131 (GNRI…GIVA), 138 to 154 (VWTS…VCRA), and 161 to 178 (AAVA…VVAG).

This sequence belongs to the Tim17/Tim22/Tim23 family. In terms of assembly, homomultimer. Component of the TIM17:23 complex at least composed of TIM23, TIM17 and TIM50. The complex interacts with the TIM44 component of the PAM complex. Also part of the NADH-ubiquinone oxidoreductase complex I. Interacts with OEP163, TIM17-2, TIM21, TIM50 and MPPA2. As to expression, expressed in roots and young cotyledons. Detected in leaves and flowers.

It is found in the mitochondrion inner membrane. Essential component of the TIM17:23 complex, a complex that mediates the translocation of transit peptide-containing proteins across the mitochondrial inner membrane. Links the inner and outer membranes. This is Mitochondrial import inner membrane translocase subunit TIM23-2 (TIM23-2) from Arabidopsis thaliana (Mouse-ear cress).